Reading from the N-terminus, the 103-residue chain is Large ribosomal subunit protein uL24 (103 aa).

This sequence belongs to the universal ribosomal protein uL24 family. In terms of assembly, part of the 50S ribosomal subunit.

Its function is as follows. One of two assembly initiator proteins, it binds directly to the 5'-end of the 23S rRNA, where it nucleates assembly of the 50S subunit. Functionally, one of the proteins that surrounds the polypeptide exit tunnel on the outside of the subunit. In Actinobacillus pleuropneumoniae serotype 5b (strain L20), this protein is Large ribosomal subunit protein uL24.